The following is a 286-amino-acid chain: Probable xyloglucan endotransglucosylase/hydrolase protein 23 (286 aa).

A signal peptide spans 1–24 (MAMISYSTIVVALLASFMICSVSA). A GH16 domain is found at 25–214 (NFQRDVEITW…WSKAPFTASY (190 aa)). The Nucleophile role is filled by Glu-100. The active-site Proton donor is Glu-104. Glu-104 is a binding site for xyloglucan. Asn-108 is a glycosylation site (N-linked (GlcNAc...) asparagine). Residues 117–119 (HTN), 127–129 (DRE), 193–194 (EW), and Gly-198 contribute to the xyloglucan site. A disulfide bridge links Cys-222 with Cys-231. Residue Asn-233 is glycosylated (N-linked (GlcNAc...) asparagine). Cys-269 and Cys-283 are joined by a disulfide. Arg-274 serves as a coordination point for xyloglucan.

This sequence belongs to the glycosyl hydrolase 16 family. XTH group 2 subfamily. In terms of processing, contains at least one intrachain disulfide bond essential for its enzymatic activity.

The protein localises to the secreted. The protein resides in the cell wall. It is found in the extracellular space. Its subcellular location is the apoplast. It carries out the reaction breaks a beta-(1-&gt;4) bond in the backbone of a xyloglucan and transfers the xyloglucanyl segment on to O-4 of the non-reducing terminal glucose residue of an acceptor, which can be a xyloglucan or an oligosaccharide of xyloglucan.. Functionally, catalyzes xyloglucan endohydrolysis (XEH) and/or endotransglycosylation (XET). Cleaves and religates xyloglucan polymers, an essential constituent of the primary cell wall, and thereby participates in cell wall construction of growing tissues. In Arabidopsis thaliana (Mouse-ear cress), this protein is Probable xyloglucan endotransglucosylase/hydrolase protein 23 (XTH23).